Consider the following 452-residue polypeptide: Neuromedin-K receptor (452 aa).

At M1–R71 the chain is on the extracellular side. N9, N23, N40, and N60 each carry an N-linked (GlcNAc...) asparagine glycan. Residues I72–I94 traverse the membrane as a helical segment. The Cytoplasmic portion of the chain corresponds to W95–R104. Residues T105–T126 form a helical membrane-spanning segment. Over L127–R146 the chain is Extracellular. C145 and C220 are oxidised to a cystine. Residues F147–V168 form a helical membrane-spanning segment. Topologically, residues D169–K188 are cytoplasmic. The chain crosses the membrane as a helical span at residues I189–S209. The Extracellular portion of the chain corresponds to K210–F232. Residues T233 to V257 form a helical membrane-spanning segment. Over G258–K286 the chain is Cytoplasmic. The chain crosses the membrane as a helical span at residues M287–L308. Residues T309 to I321 are Extracellular-facing. A helical transmembrane segment spans residues Q322–L346. The Cytoplasmic segment spans residues N347–S452. C361 carries S-palmitoyl cysteine lipidation. Residues F400–S452 form a disordered region. Low complexity predominate over residues K432–S452.

The protein belongs to the G-protein coupled receptor 1 family. In terms of processing, the anchoring of this receptor to the plasma membrane is probably mediated by the palmitoylation of a cysteine residue.

Its subcellular location is the cell membrane. Functionally, this is a receptor for the tachykinin neuropeptide neuromedin-K (neurokinin B). It is associated with G proteins that activate a phosphatidylinositol-calcium second messenger system. The rank order of affinity of this receptor to tachykinins is: neuromedin-K &gt; substance K &gt; substance P. The chain is Neuromedin-K receptor (Tacr3) from Rattus norvegicus (Rat).